Here is a 474-residue protein sequence, read N- to C-terminus: Bifunctional protein HldE (474 aa).

Positions 1–318 (MKVTLPDFNK…ENAIRGRADN (318 aa)) are ribokinase. 195–198 (NMSE) contacts ATP. D264 is a catalytic residue. The interval 344–474 (MTNGCFDILH…TNIINAIKKK (131 aa)) is cytidylyltransferase.

It in the N-terminal section; belongs to the carbohydrate kinase PfkB family. The protein in the C-terminal section; belongs to the cytidylyltransferase family. In terms of assembly, homodimer.

The enzyme catalyses D-glycero-beta-D-manno-heptose 7-phosphate + ATP = D-glycero-beta-D-manno-heptose 1,7-bisphosphate + ADP + H(+). The catalysed reaction is D-glycero-beta-D-manno-heptose 1-phosphate + ATP + H(+) = ADP-D-glycero-beta-D-manno-heptose + diphosphate. The protein operates within nucleotide-sugar biosynthesis; ADP-L-glycero-beta-D-manno-heptose biosynthesis; ADP-L-glycero-beta-D-manno-heptose from D-glycero-beta-D-manno-heptose 7-phosphate: step 1/4. It functions in the pathway nucleotide-sugar biosynthesis; ADP-L-glycero-beta-D-manno-heptose biosynthesis; ADP-L-glycero-beta-D-manno-heptose from D-glycero-beta-D-manno-heptose 7-phosphate: step 3/4. Catalyzes the phosphorylation of D-glycero-D-manno-heptose 7-phosphate at the C-1 position to selectively form D-glycero-beta-D-manno-heptose-1,7-bisphosphate. Its function is as follows. Catalyzes the ADP transfer from ATP to D-glycero-beta-D-manno-heptose 1-phosphate, yielding ADP-D-glycero-beta-D-manno-heptose. In Proteus mirabilis (strain HI4320), this protein is Bifunctional protein HldE.